Reading from the N-terminus, the 233-residue chain is Clathrin light chain (233 aa).

The segment at 1 to 124 (MSEKFPPLED…EDRSEVVDQW (124 aa)) is disordered. Over residues 17-43 (PNDKKDDDTDFLKREAEILGDEFKTEQ) the composition is skewed to basic and acidic residues. Residue threonine 49 is modified to Phosphothreonine. Serine 52 is subject to Phosphoserine. A compositionally biased stretch (acidic residues) spans 56 to 67 (DDDEIRDFEEQF). Residues 69–92 (DINSANGAVSSDQNGSATVSSGND) show a composition bias toward polar residues. Residues 112–124 (SVKEDRSEVVDQW) are compositionally biased toward basic and acidic residues. The stretch at 125 to 186 (KQRRAVEIHE…EAFLKKRDEF (62 aa)) forms a coiled coil. The tract at residues 144–204 (KELQDEAIKH…DRALQLINQD (61 aa)) is involved in binding clathrin heavy chain.

The protein belongs to the clathrin light chain family. Clathrin coats are formed from molecules containing 3 heavy chains and 3 light chains. Interacts with the auxilin-like clathrin uncoating factor SWA2.

It is found in the cytoplasmic vesicle membrane. The protein localises to the membrane. Its subcellular location is the coated pit. In terms of biological role, clathrin is the major protein of the polyhedral coat of coated pits and vesicles. In yeast, it is involved in the retention of proteins in an intracellular membrane compartment, presumably the trans-Golgi. The yeast light chain is important for cell growth. The light chain may help to properly orient the assembly/ disassembly of the clathrin coats. The protein is Clathrin light chain (CLC1) of Saccharomyces cerevisiae (strain ATCC 204508 / S288c) (Baker's yeast).